The chain runs to 450 residues: Na(+)/H(+) antiporter NhaA (450 aa).

Helical transmembrane passes span 24–44 (FFAI…LALV), 75–95 (LILW…GLEI), 111–131 (ALPI…YLAL), 140–160 (GWGV…SLLG), 169–189 (VFLT…IAFF), 196–216 (FSFL…NWLG), 224–244 (LLVG…ATIA), 318–338 (WVAW…TVSA), 352–372 (IFFG…WLLV), 390–410 (GIGW…TLAF), and 422–442 (SILC…RVLL).

Belongs to the NhaA Na(+)/H(+) (TC 2.A.33) antiporter family.

The protein localises to the cell inner membrane. It carries out the reaction Na(+)(in) + 2 H(+)(out) = Na(+)(out) + 2 H(+)(in). Its function is as follows. Na(+)/H(+) antiporter that extrudes sodium in exchange for external protons. The sequence is that of Na(+)/H(+) antiporter NhaA from Oleidesulfovibrio alaskensis (strain ATCC BAA-1058 / DSM 17464 / G20) (Desulfovibrio alaskensis).